The primary structure comprises 329 residues: Ketol-acid reductoisomerase (NADP(+)) (329 aa).

The KARI N-terminal Rossmann domain occupies 2–181 (MKKYYESDAD…GATRAVVLET (180 aa)). NADP(+)-binding positions include 25 to 28 (YGSQ), arginine 48, serine 52, and 82 to 85 (DELQ). Histidine 107 is an active-site residue. Glycine 133 is an NADP(+) binding site. The KARI C-terminal knotted domain occupies 182–327 (TFREETETDL…KEVRAMMPQF (146 aa)). Mg(2+) contacts are provided by aspartate 190, glutamate 194, glutamate 226, and glutamate 230. Serine 251 provides a ligand contact to substrate.

The protein belongs to the ketol-acid reductoisomerase family. The cofactor is Mg(2+).

It carries out the reaction (2R)-2,3-dihydroxy-3-methylbutanoate + NADP(+) = (2S)-2-acetolactate + NADPH + H(+). The enzyme catalyses (2R,3R)-2,3-dihydroxy-3-methylpentanoate + NADP(+) = (S)-2-ethyl-2-hydroxy-3-oxobutanoate + NADPH + H(+). The protein operates within amino-acid biosynthesis; L-isoleucine biosynthesis; L-isoleucine from 2-oxobutanoate: step 2/4. Its pathway is amino-acid biosynthesis; L-valine biosynthesis; L-valine from pyruvate: step 2/4. Its function is as follows. Involved in the biosynthesis of branched-chain amino acids (BCAA). Catalyzes an alkyl-migration followed by a ketol-acid reduction of (S)-2-acetolactate (S2AL) to yield (R)-2,3-dihydroxy-isovalerate. In the isomerase reaction, S2AL is rearranged via a Mg-dependent methyl migration to produce 3-hydroxy-3-methyl-2-ketobutyrate (HMKB). In the reductase reaction, this 2-ketoacid undergoes a metal-dependent reduction by NADPH to yield (R)-2,3-dihydroxy-isovalerate. This is Ketol-acid reductoisomerase (NADP(+)) from Methanoregula boonei (strain DSM 21154 / JCM 14090 / 6A8).